Here is a 92-residue protein sequence, read N- to C-terminus: Small ribosomal subunit protein uS19 (92 aa).

This sequence belongs to the universal ribosomal protein uS19 family.

Functionally, protein S19 forms a complex with S13 that binds strongly to the 16S ribosomal RNA. This is Small ribosomal subunit protein uS19 from Pectobacterium atrosepticum (strain SCRI 1043 / ATCC BAA-672) (Erwinia carotovora subsp. atroseptica).